A 543-amino-acid chain; its full sequence is DM7 family protein GG19680 (543 aa).

Over residues 415 to 430 (GETQEMDEAHPTKEES) the composition is skewed to basic and acidic residues. The disordered stretch occupies residues 415–443 (GETQEMDEAHPTKEESKSEEEGEVQSGSQ).

Belongs to the DM7 family.

In Drosophila erecta (Fruit fly), this protein is DM7 family protein GG19680.